A 628-amino-acid polypeptide reads, in one-letter code: ATP-dependent zinc metalloprotease FtsH (628 aa).

The Stromal portion of the chain corresponds to 1–7 (MKLSWKT). Residues 8-28 (LLLWSLPIFVVGFFFWQGFLG) traverse the membrane as a helical segment. Residues 29 to 118 (PTTTDVGSNI…AHPPKSTSAV (90 aa)) are Lumenal-facing. Residues 119 to 139 (WGLLGNLLFPLILVGGLAFLF) form a helical membrane-spanning segment. Topologically, residues 140–628 (RRSNNASGGP…PEKNYYISQF (489 aa)) are stromal. 213-220 (GPPGTGKT) provides a ligand contact to ATP. Histidine 434 provides a ligand contact to Zn(2+). The active site involves glutamate 435. Residues histidine 438 and aspartate 512 each coordinate Zn(2+).

It in the central section; belongs to the AAA ATPase family. In the C-terminal section; belongs to the peptidase M41 family. Homohexamer. Zn(2+) serves as cofactor.

The protein localises to the plastid. The protein resides in the chloroplast thylakoid membrane. Its function is as follows. Acts as a processive, ATP-dependent zinc metallopeptidase. This Porphyra purpurea (Red seaweed) protein is ATP-dependent zinc metalloprotease FtsH.